Here is a 149-residue protein sequence, read N- to C-terminus: Large ribosomal subunit protein bL9 (149 aa).

It belongs to the bacterial ribosomal protein bL9 family.

Functionally, binds to the 23S rRNA. The sequence is that of Large ribosomal subunit protein bL9 from Bacillus licheniformis (strain ATCC 14580 / DSM 13 / JCM 2505 / CCUG 7422 / NBRC 12200 / NCIMB 9375 / NCTC 10341 / NRRL NRS-1264 / Gibson 46).